Here is a 1010-residue protein sequence, read N- to C-terminus: MASADMSPSRSHPHDATRSPSPRTQSPSPRDEDGSRSPGERTPSPPSRDPSPYRSPGERTPSPSPRRDRSLSPRDQPHSHPRSRSPTPRSQSPSRRSVRSPSPRQGSPARRVDRSSSPRARSPPPRRHSRSPPLRGQPPPPRHRDAGGDYRPVRKERTPTPPPVAVKTEEEKLADARAEYQKLLNLRSQGVYLPPHRLRALQAAITDKKTREYQRMAWEALKKSVNGLVNKVNTANIKFVVPELFGENLIRGRGLFCQSLLKAQHASLPFTPIYACLAAICNTKLPQVGELLVKRLVLRFRKAFKRNDKAVCLSSTMFIAHLVNNQVVHEMIAAQILLLLLAKPTDDSVEIAVGLMREVGLFLEEMSPAIAHAVFDQFRNILHEADIDRRTQYMIEVLFQVRKDKYKDNPVIKEELDLVEEEDQITHRIGLDDEIDPQDGLNVFKMDPNWEENEEEYKKLKAEILGEASDDDEDDDDDDESESGSESEDEEQKALEIKDQSNADLVNLRRTIYLSIQSSADPEEAAHKLMKLRLPAGQEAELVSMIVESCAQEKVYLKFMGLLGERFARLNRMWMDLFEESFAKYYSTIHRYETNKLRNIARFFGHLLATDAIGWHVFSVIHLNEEETTSASRIFIKILFEDLQENIGSAKLKARMSEETLQPSLQGIFPHDEPRNIRFSINYFTSIKMGYLTDEMRTFLANMPKPALPAPPADSDSESVSSYSSYSSYSSRSRSRSLTPRKDTRGRSLSRTPPRRGRGRSYSRTPSRSRSRSRSYSRSVSKSVSRSPPRRRAVESRSPSPPPRGRGRSYDRYSRSPSRSRSRTRSPAAAPPIRRGRSGTRSRSRSYSRSPSPPPARGYPTRGRAPVSNNDRAAAASGKRRREGSYSASRSPHPPPQQRLRRGSYSRSRSRSPIPIRGNGPAGRDTGRAGPAPARGGRRNRSYSRSRTRSPPPLADAATGSRRVVSRSPSPVVGNNKRRRSYSSSRSRSRSSSRSRYRSRSPVAKRGRVD.

The segment covering 1–10 (MASADMSPSR) has biased composition (polar residues). The tract at residues 1–166 (MASADMSPSR…RTPTPPPVAV (166 aa)) is disordered. The span at 18–28 (RSPSPRTQSPS) shows a compositional bias: low complexity. Basic and acidic residues-rich tracts occupy residues 29 to 39 (PRDEDGSRSPG) and 65 to 78 (PRRD…DQPH). Positions 84–109 (RSPTPRSQSPSRRSVRSPSPRQGSPA) are enriched in low complexity. Residues 142 to 158 (RHRDAGGDYRPVRKERT) are compositionally biased toward basic and acidic residues. The MIF4G domain occupies 222 to 405 (KKSVNGLVNK…EVLFQVRKDK (184 aa)). The tract at residues 466-498 (GEASDDDEDDDDDDESESGSESEDEEQKALEIK) is disordered. A compositionally biased stretch (acidic residues) spans 468–491 (ASDDDEDDDDDDESESGSESEDEE). One can recognise an MI domain in the interval 507–623 (NLRRTIYLSI…GWHVFSVIHL (117 aa)). Residues 708 to 1010 (LPAPPADSDS…SPVAKRGRVD (303 aa)) form a disordered region. Residues 718–732 (ESVSSYSSYSSYSSR) show a composition bias toward low complexity. Residues 753 to 775 (PPRRGRGRSYSRTPSRSRSRSRS) are compositionally biased toward basic residues. Over residues 776-787 (YSRSVSKSVSRS) the composition is skewed to low complexity. Composition is skewed to basic residues over residues 834 to 846 (RRGR…RSRS) and 899 to 910 (RLRRGSYSRSRS). Residues 911–935 (RSPIPIRGNGPAGRDTGRAGPAPAR) show a composition bias toward low complexity. Positions 936–948 (GGRRNRSYSRSRT) are enriched in basic residues. Over residues 961–973 (SRRVVSRSPSPVV) the composition is skewed to low complexity. Positions 976 to 1010 (NKRRRSYSSSRSRSRSSSRSRYRSRSPVAKRGRVD) are enriched in basic residues.

Belongs to the CWC22 family. Associated with the spliceosome.

Its subcellular location is the cytoplasm. It localises to the nucleus. In terms of biological role, involved in pre-mRNA splicing. The sequence is that of Pre-mRNA-splicing factor cwc22 (msp-1) from Neurospora crassa (strain ATCC 24698 / 74-OR23-1A / CBS 708.71 / DSM 1257 / FGSC 987).